Reading from the N-terminus, the 419-residue chain is Phospho-N-acetylmuramoyl-pentapeptide-transferase (419 aa).

Helical transmembrane passes span 22 to 42, 72 to 92, 99 to 119, 135 to 155, 208 to 228, 238 to 258, 278 to 298, 303 to 323, 328 to 348, and 396 to 416; these read YVSFRSAVAIILALLLATVIG, TPTMGGLIIIISILIPTLLLA, ILLMIVTTLLLGSLGFLDDYI, IIGQVGLGFIIGIVLYMNPAV, VLFGWILFVCVAVVVVTFISN, GLATGSSAIIGVVLAIFAYVS, LTIFAFAFVGATIGFLWYNAY, FMGDTGSLTLGGIIAVFALII, LLPILCFVFIIEGLSVMIQVF, and KITVRFWLVGIIMAAITIATL.

It belongs to the glycosyltransferase 4 family. MraY subfamily. Mg(2+) is required as a cofactor.

The protein resides in the cell inner membrane. It carries out the reaction UDP-N-acetyl-alpha-D-muramoyl-L-alanyl-gamma-D-glutamyl-meso-2,6-diaminopimeloyl-D-alanyl-D-alanine + di-trans,octa-cis-undecaprenyl phosphate = di-trans,octa-cis-undecaprenyl diphospho-N-acetyl-alpha-D-muramoyl-L-alanyl-D-glutamyl-meso-2,6-diaminopimeloyl-D-alanyl-D-alanine + UMP. It participates in cell wall biogenesis; peptidoglycan biosynthesis. In terms of biological role, catalyzes the initial step of the lipid cycle reactions in the biosynthesis of the cell wall peptidoglycan: transfers peptidoglycan precursor phospho-MurNAc-pentapeptide from UDP-MurNAc-pentapeptide onto the lipid carrier undecaprenyl phosphate, yielding undecaprenyl-pyrophosphoryl-MurNAc-pentapeptide, known as lipid I. The protein is Phospho-N-acetylmuramoyl-pentapeptide-transferase of Porphyromonas gingivalis (strain ATCC 33277 / DSM 20709 / CIP 103683 / JCM 12257 / NCTC 11834 / 2561).